We begin with the raw amino-acid sequence, 447 residues long: Phosphoglucosamine mutase (447 aa).

Residue S104 is the Phosphoserine intermediate of the active site. Mg(2+) contacts are provided by S104, D243, D245, and D247. At S104 the chain carries Phosphoserine.

It belongs to the phosphohexose mutase family. It depends on Mg(2+) as a cofactor. Activated by phosphorylation.

The catalysed reaction is alpha-D-glucosamine 1-phosphate = D-glucosamine 6-phosphate. Catalyzes the conversion of glucosamine-6-phosphate to glucosamine-1-phosphate. The polypeptide is Phosphoglucosamine mutase (Corynebacterium glutamicum (strain ATCC 13032 / DSM 20300 / JCM 1318 / BCRC 11384 / CCUG 27702 / LMG 3730 / NBRC 12168 / NCIMB 10025 / NRRL B-2784 / 534)).